Here is a 353-residue protein sequence, read N- to C-terminus: Photosystem II D2 protein (353 aa).

Thr2 is modified (N-acetylthreonine). Thr2 carries the phosphothreonine modification. The helical transmembrane segment at 41 to 61 (CAYFALGGWFTGTTFVTSWYT) threads the bilayer. Position 118 (His118) interacts with chlorophyll a. A helical transmembrane segment spans residues 125-141 (GFMLRQFEIARSVQLRP). Residues Gln130 and Asn143 each coordinate pheophytin a. The helical transmembrane segment at 153–166 (VFVSVFLIYPLGQS) threads the bilayer. His198 contributes to the chlorophyll a binding site. A helical membrane pass occupies residues 208 to 228 (AALLCAIHGATVENTLFEDGD). A plastoquinone is bound by residues His215 and Phe262. His215 is a Fe cation binding site. His269 provides a ligand contact to Fe cation. The helical transmembrane segment at 279-295 (GLWMSALGVVGLALNLR) threads the bilayer.

The protein belongs to the reaction center PufL/M/PsbA/D family. As to quaternary structure, PSII is composed of 1 copy each of membrane proteins PsbA, PsbB, PsbC, PsbD, PsbE, PsbF, PsbH, PsbI, PsbJ, PsbK, PsbL, PsbM, PsbT, PsbX, PsbY, PsbZ, Psb30/Ycf12, at least 3 peripheral proteins of the oxygen-evolving complex and a large number of cofactors. It forms dimeric complexes. The cofactor is The D1/D2 heterodimer binds P680, chlorophylls that are the primary electron donor of PSII, and subsequent electron acceptors. It shares a non-heme iron and each subunit binds pheophytin, quinone, additional chlorophylls, carotenoids and lipids. There is also a Cl(-1) ion associated with D1 and D2, which is required for oxygen evolution. The PSII complex binds additional chlorophylls, carotenoids and specific lipids..

The protein resides in the plastid. The protein localises to the chloroplast thylakoid membrane. The catalysed reaction is 2 a plastoquinone + 4 hnu + 2 H2O = 2 a plastoquinol + O2. Functionally, photosystem II (PSII) is a light-driven water:plastoquinone oxidoreductase that uses light energy to abstract electrons from H(2)O, generating O(2) and a proton gradient subsequently used for ATP formation. It consists of a core antenna complex that captures photons, and an electron transfer chain that converts photonic excitation into a charge separation. The D1/D2 (PsbA/PsbD) reaction center heterodimer binds P680, the primary electron donor of PSII as well as several subsequent electron acceptors. D2 is needed for assembly of a stable PSII complex. This chain is Photosystem II D2 protein, found in Oenothera argillicola (Appalachian evening primrose).